Here is a 1795-residue protein sequence, read N- to C-terminus: Protein TIC 214 (1795 aa).

A run of 6 helical transmembrane segments spans residues 19-39 (IINS…FSIG), 68-88 (FIAG…HLAL), 91-111 (PHTI…WNNH), 133-153 (VFLN…SSML), 176-196 (VGWL…LVWI), and 227-247 (IFSI…PSPI). A disordered region spans residues 1490 to 1517 (EKESTGQVEFESDKEQQRNSESALSNQE). Polar residues predominate over residues 1508–1517 (NSESALSNQE).

The protein belongs to the TIC214 family. In terms of assembly, part of the Tic complex.

The protein resides in the plastid. It is found in the chloroplast inner membrane. In terms of biological role, involved in protein precursor import into chloroplasts. May be part of an intermediate translocation complex acting as a protein-conducting channel at the inner envelope. This Crucihimalaya wallichii (Rock-cress) protein is Protein TIC 214.